The chain runs to 197 residues: Small ribosomal subunit protein uS2 (197 aa).

It belongs to the universal ribosomal protein uS2 family.

The protein is Small ribosomal subunit protein uS2 (rps2) of Archaeoglobus fulgidus (strain ATCC 49558 / DSM 4304 / JCM 9628 / NBRC 100126 / VC-16).